Consider the following 174-residue polypeptide: NADH-ubiquinone oxidoreductase chain 6 (174 aa).

6 helical membrane passes run 1–21 (MTYALFLLSVILVMGFVGFSS), 24–44 (SPIYGGLVLIISGAVGCAVIL), 47–67 (GGGYMGLVVFLVYLGGMMVVF), 86–106 (AEVLVSVLVGLVMEVGLVLWV), 111–131 (GVVVAVNFNSVGSWMIYEGEG), and 151–171 (WLVVVTGWTLFVGVYVVIEIA).

It belongs to the complex I subunit 6 family. Core subunit of respiratory chain NADH dehydrogenase (Complex I) which is composed of 45 different subunits.

It is found in the mitochondrion inner membrane. The enzyme catalyses a ubiquinone + NADH + 5 H(+)(in) = a ubiquinol + NAD(+) + 4 H(+)(out). Its function is as follows. Core subunit of the mitochondrial membrane respiratory chain NADH dehydrogenase (Complex I) which catalyzes electron transfer from NADH through the respiratory chain, using ubiquinone as an electron acceptor. Essential for the catalytic activity and assembly of complex I. In Pongo pygmaeus (Bornean orangutan), this protein is NADH-ubiquinone oxidoreductase chain 6 (MT-ND6).